A 39-amino-acid chain; its full sequence is LIM/homeobox protein xLIM-2B (39 aa).

The homeobox DNA-binding region spans 1–39; the sequence is KAKQLETLKAAFAATPKPTRHIREQLAQETGLNMRVIQV.

Its subcellular location is the nucleus. This chain is LIM/homeobox protein xLIM-2B (lim2b), found in Xenopus laevis (African clawed frog).